The primary structure comprises 359 residues: ATP synthase subunit gamma, chloroplastic (359 aa).

The N-terminal 35 residues, 1–35, are a transit peptide targeting the chloroplast; sequence MSCSHLSTAWSSSALASSASTTRRRSPPRSGLLVR. Residue C124 is part of the active site. C234 and C240 are disulfide-bonded.

This sequence belongs to the ATPase gamma chain family. In terms of assembly, F-type ATPases have 2 components, CF(1) - the catalytic core - and CF(0) - the membrane proton channel. CF(1) has five subunits: alpha(3), beta(3), gamma(1), delta(1), epsilon(1). CF(0) has four main subunits: a, b, b' and c.

The protein localises to the plastid. It localises to the chloroplast thylakoid membrane. Functionally, produces ATP from ADP in the presence of a proton gradient across the membrane. The gamma chain is believed to be important in regulating ATPase activity and the flow of protons through the CF(0) complex. Its function is as follows. Inceptin is a proteolytic fragment produced by insect larvae that previously ingested the protein. This peptide mediate plant perception of herbivory through the induction of volatile, phenylpropanoid and protease inhibitor defenses such as ethylene, jasmonic acid and salicylic acid for example. This is ATP synthase subunit gamma, chloroplastic from Zea mays (Maize).